A 307-amino-acid chain; its full sequence is Taste receptor type 2 member 10 (307 aa).

Topologically, residues 1–6 are extracellular; that stretch reads MLRVVE. A helical transmembrane segment spans residues 7 to 27; sequence GIFIFVVISEXVFGVLGNGFI. The Cytoplasmic portion of the chain corresponds to 28–42; that stretch reads GLVNCIDCAKNKLST. The chain crosses the membrane as a helical span at residues 43-63; sequence IGFILTGLAISRIFLIWIIIT. Residues 64-100 are Extracellular-facing; it reads DGFIQIFSPDIYASGNLIEYISYFWVIGNQSSMWFAT. N-linked (GlcNAc...) asparagine glycosylation is present at Asn-92. A helical transmembrane segment spans residues 101 to 121; sequence SLSIFYFLKIANFSNYIFLWL. The Cytoplasmic portion of the chain corresponds to 122-126; the sequence is KSRTN. A helical membrane pass occupies residues 127–147; sequence MVLPFMIVFLLISSLLNFAHI. Topologically, residues 148–179 are extracellular; the sequence is AKILNDYKMKNDTVWDLNMYKSEYFIKQILLN. N-linked (GlcNAc...) asparagine glycosylation occurs at Asn-158. A helical membrane pass occupies residues 180 to 200; the sequence is LGVIFFFTLSLITCVFLIISL. Residues 201–227 lie on the Cytoplasmic side of the membrane; that stretch reads WRHNRQMQSNVTGLRDSNTEAHVKAMK. A helical transmembrane segment spans residues 228 to 248; the sequence is VLISFXILFILYFIGMAIEIS. The Extracellular segment spans residues 249-257; the sequence is CFTVRENKL. Residues 258-278 traverse the membrane as a helical segment; the sequence is LLMFGMTTTAIYPWGHSFILI. The Cytoplasmic portion of the chain corresponds to 279–307; that stretch reads LGNSKLKQASLRVLQQLKCCEKRKNLRVT.

It belongs to the G-protein coupled receptor T2R family.

The protein resides in the membrane. In terms of biological role, receptor that may play a role in the perception of bitterness and is gustducin-linked. May play a role in sensing the chemical composition of the gastrointestinal content. The activity of this receptor may stimulate alpha gustducin, mediate PLC-beta-2 activation and lead to the gating of TRPM5. This is Taste receptor type 2 member 10 (TAS2R10) from Gorilla gorilla gorilla (Western lowland gorilla).